Here is a 142-residue protein sequence, read N- to C-terminus: MSSGAGSGTTKGGRGKPKATKSVSRSSKAGLQFPVGRIARFLKAGKYAERVGAGAPVYLSAVLEYLAAEVLELAGNAARDNKKTRIVPRHIQLAVRNDEELSKLLGSVTIANGGVLPNIHQTLLPSKVGKNKGDIGSASQEF.

Gly residues predominate over residues 1-12 (MSSGAGSGTTKG). The interval 1–28 (MSSGAGSGTTKGGRGKPKATKSVSRSSK) is disordered. Ser139 carries the post-translational modification Phosphoserine; by ATM and ATR. The [ST]-Q motif motif lies at 139-140 (SQ).

This sequence belongs to the histone H2A family. As to quaternary structure, the nucleosome is a histone octamer containing two molecules each of H2A, H2B, H3 and H4 assembled in one H3-H4 heterotetramer and two H2A-H2B heterodimers. The octamer wraps approximately 147 bp of DNA. Interacts with numerous proteins required for DNA damage signaling and repair when phosphorylated on Ser-139. Post-translationally, phosphorylated to form H2AXS139ph (gamma-H2AX) in response to DNA double strand breaks (DSBs) generated by exogenous genotoxic agents and by stalled replication forks, and may also occur during meiotic recombination events. Phosphorylation can extend up to several thousand nucleosomes from the actual site of the DSB and may mark the surrounding chromatin for recruitment of proteins required for DNA damage signaling and repair. Widespread phosphorylation may also serve to amplify the damage signal or aid repair of persistent lesions. H2AXS139ph in response to ionizing radiation is mediated by ATM while defects in DNA replication induce H2AXS139ph subsequent to activation of ATR. Dephosphorylation of H2AXS139ph by PP2A is required for DNA DSB repair. As to expression, expressed in meristems and dividing cells.

The protein localises to the nucleus. Its subcellular location is the chromosome. Variant histone H2A which replaces conventional H2A in a subset of nucleosomes. Nucleosomes wrap and compact DNA into chromatin, limiting DNA accessibility to the cellular machineries which require DNA as a template. Histones thereby play a central role in transcription regulation, DNA repair, DNA replication and chromosomal stability. DNA accessibility is regulated via a complex set of post-translational modifications of histones, also called histone code, and nucleosome remodeling. Required for checkpoint-mediated arrest of cell cycle progression in response to low doses of ionizing radiation and for efficient repair of DNA double strand breaks (DSBs) specifically when modified by C-terminal phosphorylation. The sequence is that of Probable histone H2AXb from Arabidopsis thaliana (Mouse-ear cress).